Reading from the N-terminus, the 526-residue chain is Zinc finger protein Helios (526 aa).

Residues 28–94 (DLTSSTPNGQ…IESSEVADNR (67 aa)) form a disordered region. A compositionally biased stretch (polar residues) spans 29–50 (LTSSTPNGQHASPSHMTSTNSV). Serine 56 bears the Phosphoserine mark. Residues 61–77 (DRQPLSREDEIRGHDEG) are compositionally biased toward basic and acidic residues. Residues serine 78 and serine 79 each carry the phosphoserine modification. A Glycyl lysine isopeptide (Lys-Gly) (interchain with G-Cter in SUMO2) cross-link involves residue lysine 95. 4 consecutive C2H2-type zinc fingers follow at residues 112–134 (LKCD…KRSH), 140–162 (FHCN…IKLH), 168–190 (FKCP…LRTH), and 196–219 (HKCN…ERCH). Lysine 288 is subject to N6-acetyllysine. Over residues 368–379 (ISRETSDSHENN) the composition is skewed to basic and acidic residues. Positions 368-435 (ISRETSDSHE…LNPKRKQSPA (68 aa)) are disordered. Residues lysine 442 and lysine 448 each participate in a glycyl lysine isopeptide (Lys-Gly) (interchain with G-Cter in SUMO2) cross-link. C2H2-type zinc fingers lie at residues 471–493 (FKCE…MGCH) and 499–523 (LECN…RGEH).

It belongs to the Ikaros C2H2-type zinc-finger protein family. As to quaternary structure, can form homodimers. Interacts with IKZF4 and IKZF5. Expressed in outer hair cells (OHC) of the organ of Corti. Abundant in thymus, low expression in bone marrow and brain and no detectable expression in spleen, liver, kidney or muscle. Expressed in T-cells.

It is found in the nucleus. Its function is as follows. Transcriptional regulator required for outer hair cells (OHC) maturation and, consequently, for hearing. This is Zinc finger protein Helios (Ikzf2) from Mus musculus (Mouse).